The chain runs to 407 residues: L-amino-acid oxidase (407 aa).

Cys10 and Cys94 form a disulfide bridge. The N-linked (GlcNAc...) asparagine glycan is linked to Asn93. Residue His144 coordinates substrate. Val182 provides a ligand contact to FAD. Cys252 and Cys333 are disulfide-bonded. N-linked (GlcNAc...) asparagine glycosylation is present at Asn282. Tyr293 is a substrate binding site. Residues Glu378 and 385-390 each bind FAD; that span reads GWIDST. Substrate is bound at residue 385-386; it reads GW.

It belongs to the flavin monoamine oxidase family. FIG1 subfamily. Homodimer; non-covalently linked. The cofactor is FAD. Expressed by the venom gland.

The protein localises to the secreted. It carries out the reaction an L-alpha-amino acid + O2 + H2O = a 2-oxocarboxylate + H2O2 + NH4(+). The enzyme catalyses L-leucine + O2 + H2O = 4-methyl-2-oxopentanoate + H2O2 + NH4(+). The catalysed reaction is L-phenylalanine + O2 + H2O = 3-phenylpyruvate + H2O2 + NH4(+). It catalyses the reaction L-isoleucine + O2 + H2O = (S)-3-methyl-2-oxopentanoate + H2O2 + NH4(+). It carries out the reaction L-aspartate + O2 + H2O = oxaloacetate + H2O2 + NH4(+). The enzyme catalyses L-lysine + O2 + H2O = 6-amino-2-oxohexanoate + H2O2 + NH4(+). The catalysed reaction is L-glutamate + O2 + H2O = H2O2 + 2-oxoglutarate + NH4(+). In terms of biological role, catalyzes an oxidative deamination of predominantly hydrophobic and aromatic L-amino acids, thus producing hydrogen peroxide that may contribute to the diverse toxic effects of this enzyme. Is highly active on L-Leu followed by L-Phe and L-Ile, moderately active on L-Asp, L-Glu, and L-Lys, and not active on L-Pro, L-Asn, L-Gly, L-Ser and L-Cys. Exhibits diverse biological activities such as antibacterial activity (Minimal inhibitory concentrations (MIC) are 9.0 ug/ml against S.aureus, 144.0 ug/ml against P.aeruginosa and 288.0 ug/ml against E.coli) and inhibition of ADP- and TMVA-induced platelet aggregation. Effects of snake L-amino oxidases on platelets are controversial, since they either induce aggregation or inhibit agonist-induced aggregation. These different effects are probably due to different experimental conditions. Unlike other snake venom L-amino acid oxidases, does not induce hemorrhage. This protein may also induce hemolysis, edema, apoptosis and have antiparasitic activities. In Daboia siamensis (Eastern Russel's viper), this protein is L-amino-acid oxidase.